Here is a 336-residue protein sequence, read N- to C-terminus: Phosphatidylglycerol--prolipoprotein diacylglyceryl transferase (336 aa).

3 helical membrane-spanning segments follow: residues 16–36 (IGPV…VLAV), 53–73 (ILDI…IYHI), and 93–113 (IWNG…AAWA). Arg141 lines the a 1,2-diacyl-sn-glycero-3-phospho-(1'-sn-glycerol) pocket. Helical transmembrane passes span 190–210 (PTFL…VFLG), 220–240 (GSLF…IEAL), and 253–273 (INVW…IVIQ).

This sequence belongs to the Lgt family.

The protein resides in the cell membrane. It carries out the reaction L-cysteinyl-[prolipoprotein] + a 1,2-diacyl-sn-glycero-3-phospho-(1'-sn-glycerol) = an S-1,2-diacyl-sn-glyceryl-L-cysteinyl-[prolipoprotein] + sn-glycerol 1-phosphate + H(+). It functions in the pathway protein modification; lipoprotein biosynthesis (diacylglyceryl transfer). In terms of biological role, catalyzes the transfer of the diacylglyceryl group from phosphatidylglycerol to the sulfhydryl group of the N-terminal cysteine of a prolipoprotein, the first step in the formation of mature lipoproteins. This Bifidobacterium adolescentis (strain ATCC 15703 / DSM 20083 / NCTC 11814 / E194a) protein is Phosphatidylglycerol--prolipoprotein diacylglyceryl transferase.